Reading from the N-terminus, the 268-residue chain is GTP cyclohydrolase FolE2 (268 aa).

The protein belongs to the GTP cyclohydrolase IV family.

It catalyses the reaction GTP + H2O = 7,8-dihydroneopterin 3'-triphosphate + formate + H(+). It functions in the pathway cofactor biosynthesis; 7,8-dihydroneopterin triphosphate biosynthesis; 7,8-dihydroneopterin triphosphate from GTP: step 1/1. In terms of biological role, converts GTP to 7,8-dihydroneopterin triphosphate. The polypeptide is GTP cyclohydrolase FolE2 (Paraburkholderia xenovorans (strain LB400)).